Here is a 111-residue protein sequence, read N- to C-terminus: Universal stress protein B (111 aa).

The next 2 helical transmembrane spans lie at 1–21 and 90–110; these read MFSTIALFWALCLVCIINMMR and FILTSSLSGLVVICLISMLIW.

The protein belongs to the universal stress protein B family.

It is found in the cell inner membrane. This chain is Universal stress protein B, found in Photorhabdus laumondii subsp. laumondii (strain DSM 15139 / CIP 105565 / TT01) (Photorhabdus luminescens subsp. laumondii).